The primary structure comprises 506 residues: Methylthioalkylmalate synthase 1, chloroplastic (506 aa).

A chloroplast-targeting transit peptide spans 1-49 (MASSLLTSSVMIPTTGSTVVGRSVLPFQSSLHSLRLTHSYKNPALFISC). One can recognise a Pyruvate carboxyltransferase domain in the interval 85-359 (VRVFDTTLRD…YTKIDTRQIM (275 aa)). Residue Ser98 is modified to Phosphoserine.

The protein belongs to the alpha-IPM synthase/homocitrate synthase family. In terms of assembly, monomer. It depends on Mn(2+) as a cofactor. In terms of tissue distribution, highly expressed in leaves, flowers, roots and siliques. Not detected in flowers in PubMed:12432038.

It is found in the plastid. Its subcellular location is the chloroplast. It catalyses the reaction an omega-(methylsulfanyl)-2-oxoalkanoate + acetyl-CoA + H2O = a 2-(omega-methylsulfanyl)alkylmalate + CoA + H(+). Its activity is regulated as follows. 1 mM DTT required for activity. Activated by ATP and inhibited by iodoacetamide. Functionally, determines the side chain length of aliphatic glucosinolate structures. Catalyzes exclusively the condensation reactions of both the first and second methionine carbon chain elongation. The polypeptide is Methylthioalkylmalate synthase 1, chloroplastic (MAM1) (Arabidopsis thaliana (Mouse-ear cress)).